A 158-amino-acid chain; its full sequence is Cyclic pyranopterin monophosphate synthase (158 aa).

Substrate is bound by residues 75 to 77 (LCH) and 113 to 114 (ME). D128 is an active-site residue.

It belongs to the MoaC family. As to quaternary structure, homohexamer; trimer of dimers.

The enzyme catalyses (8S)-3',8-cyclo-7,8-dihydroguanosine 5'-triphosphate = cyclic pyranopterin phosphate + diphosphate. Its pathway is cofactor biosynthesis; molybdopterin biosynthesis. In terms of biological role, catalyzes the conversion of (8S)-3',8-cyclo-7,8-dihydroguanosine 5'-triphosphate to cyclic pyranopterin monophosphate (cPMP). This is Cyclic pyranopterin monophosphate synthase from Mannheimia succiniciproducens (strain KCTC 0769BP / MBEL55E).